The primary structure comprises 199 residues: NAD(P)H quinone oxidoreductase PST3 (199 aa).

The region spanning Val5–Phe193 is the Flavodoxin-like domain. FMN-binding positions include Ser11–His15 and Ile111–Gly165.

It belongs to the WrbA family. It depends on FMN as a cofactor.

It is found in the cell membrane. It carries out the reaction a quinone + NADH + H(+) = a quinol + NAD(+). The catalysed reaction is a quinone + NADPH + H(+) = a quinol + NADP(+). Flavodoxin-like protein (FLP) that plays a role in cell wall integrity, oxidative stress protection and virulence. FLPs act as NAD(P)H quinone oxidoreductases. Reduces ubiquinone (coenzyme Q), enabling it to serve as an antioxidant in the membrane. This Candida albicans (strain SC5314 / ATCC MYA-2876) (Yeast) protein is NAD(P)H quinone oxidoreductase PST3.